The chain runs to 195 residues: Interferon omega-1 (195 aa).

The signal sequence occupies residues 1 to 23 (MAFVLSLLMALVLVSYGPGGSLG). Cystine bridges form between C24-C122 and C52-C162.

Belongs to the alpha/beta interferon family.

It localises to the secreted. The sequence is that of Interferon omega-1 (IFNW1) from Bos taurus (Bovine).